Here is a 1704-residue protein sequence, read N- to C-terminus: Vitellogenin-1 (1704 aa).

The N-terminal stretch at 1 to 14 (MKAVVLALTLAFVA) is a signal peptide. Residues 22–660 (FAAGKTYVYK…DAATFMPKSF (639 aa)) enclose the Vitellogenin domain. Residues Asn-446, Asn-635, Asn-903, Asn-908, Asn-1019, Asn-1054, Asn-1080, Asn-1121, Asn-1174, Asn-1285, Asn-1322, Asn-1375, Asn-1379, Asn-1405, Asn-1456, and Asn-1512 are each glycosylated (N-linked (GlcNAc...) asparagine). The segment covering 1078 to 1109 (RRNSSSSSSSSSSSSSESRSSRSSSSSSSSSR) has biased composition (low complexity). The segment at 1078–1213 (RRNSSSSSSS…SSDRRSKEVM (136 aa)) is disordered. Over residues 1122-1204 (SSSSSSSRRS…FSDSSSSSSS (83 aa)) the composition is skewed to low complexity. In terms of domain architecture, VWFD spans 1442 to 1617 (AECSFVEDTL…SWILPAESCR (176 aa)). Disulfide bonds link Cys-1444–Cys-1580 and Cys-1467–Cys-1616.

Phosvitin, an egg yolk storage protein, is one of the most highly phosphorylated (10%) proteins in nature. Post-translationally, the N-terminal of the blood vitellogenin is blocked. In terms of tissue distribution, produced by the liver, secreted into the blood and then sequestered by receptor mediated endocytosis into growing oocytes, where it is generally cleaved, giving rise to the respective yolk components composed of complex suite of small cleavage products.

Functionally, precursor of the major egg-yolk proteins that are sources of nutrients during early development of oviparous organisms. This chain is Vitellogenin-1 (vtg1), found in Fundulus heteroclitus (Killifish).